Consider the following 272-residue polypeptide: Ribosomal RNA small subunit methyltransferase A (272 aa).

S-adenosyl-L-methionine-binding residues include Asn-15, Ile-17, Gly-42, Glu-64, Asp-90, and Asn-109.

This sequence belongs to the class I-like SAM-binding methyltransferase superfamily. rRNA adenine N(6)-methyltransferase family. RsmA subfamily.

The protein localises to the cytoplasm. The enzyme catalyses adenosine(1518)/adenosine(1519) in 16S rRNA + 4 S-adenosyl-L-methionine = N(6)-dimethyladenosine(1518)/N(6)-dimethyladenosine(1519) in 16S rRNA + 4 S-adenosyl-L-homocysteine + 4 H(+). Specifically dimethylates two adjacent adenosines (A1518 and A1519) in the loop of a conserved hairpin near the 3'-end of 16S rRNA in the 30S particle. May play a critical role in biogenesis of 30S subunits. The chain is Ribosomal RNA small subunit methyltransferase A from Wolbachia sp. subsp. Drosophila simulans (strain wRi).